The primary structure comprises 238 residues: Type III secretion protein hrcQa (238 aa).

The hrcQa-C stretch occupies residues 66–238 (DAEALLSLLG…SHEEHRHHEY (173 aa)).

Interacts with hrcQb.

It is found in the cell inner membrane. Its function is as follows. Component of the type III secretion system, which is required for effector protein delivery, parasitism, and pathogenicity. Probably participates in the formation of a C-ring-like assembly along with hrcQb. This is Type III secretion protein hrcQa (hrcQa) from Pseudomonas savastanoi pv. phaseolicola (Pseudomonas syringae pv. phaseolicola).